The chain runs to 245 residues: 1-(5-phosphoribosyl)-5-[(5-phosphoribosylamino)methylideneamino] imidazole-4-carboxamide isomerase (245 aa).

Residue aspartate 7 is the Proton acceptor of the active site. Aspartate 129 (proton donor) is an active-site residue.

This sequence belongs to the HisA/HisF family.

Its subcellular location is the cytoplasm. It carries out the reaction 1-(5-phospho-beta-D-ribosyl)-5-[(5-phospho-beta-D-ribosylamino)methylideneamino]imidazole-4-carboxamide = 5-[(5-phospho-1-deoxy-D-ribulos-1-ylimino)methylamino]-1-(5-phospho-beta-D-ribosyl)imidazole-4-carboxamide. Its pathway is amino-acid biosynthesis; L-histidine biosynthesis; L-histidine from 5-phospho-alpha-D-ribose 1-diphosphate: step 4/9. This is 1-(5-phosphoribosyl)-5-[(5-phosphoribosylamino)methylideneamino] imidazole-4-carboxamide isomerase from Shewanella sp. (strain MR-7).